Consider the following 594-residue polypeptide: Transcriptional repressor p66-beta (594 aa).

Ser-17 carries the post-translational modification Phosphoserine. Residues Lys-33 and Lys-66 each participate in a glycyl lysine isopeptide (Lys-Gly) (interchain with G-Cter in SUMO2) cross-link. Residues 62-143 (ELPTKQDGSG…ASSPRSSSRM (82 aa)) are disordered. The span at 74 to 89 (GYEEKLNGNLRPHGDN) shows a compositional bias: basic and acidic residues. Lys-98 is covalently cross-linked (Glycyl lysine isopeptide (Lys-Gly) (interchain with G-Cter in SUMO2)). Positions 109-119 (SARRSEPDRGR) are enriched in basic and acidic residues. Position 121 is a phosphothreonine (Thr-121). Ser-123, Ser-130, Ser-135, and Ser-136 each carry phosphoserine. Over residues 130 to 140 (SDNEASSPRSS) the composition is skewed to low complexity. Positions 141–195 (SRMEERLKAANLEMFKGKGMEERQQLIKQLRDELRLEEARLVLLKKLRQSQLQKE) form a coiled coil. Lys-148 is covalently cross-linked (Glycyl lysine isopeptide (Lys-Gly) (interchain with G-Cter in SUMO2)). Residues 166–191 (LIKQLRDELRLEEARLVLLKKLRQSQ) form a CR1; interaction with MBD2 and MBD3 region. A Glycyl lysine isopeptide (Lys-Gly) (interchain with G-Cter in SUMO2) cross-link involves residue Lys-200. Ser-209 carries the post-translational modification Phosphoserine. Residues 214 to 237 (SPAHVGQQGLSKLPSRPGAQGIEP) form a disordered region. Residue Lys-282 forms a Glycyl lysine isopeptide (Lys-Gly) (interchain with G-Cter in SUMO2) linkage. A phosphoserine mark is found at Ser-334, Ser-339, and Ser-341. The interval 341-481 (SAMSDAANSQ…QEQEIEQRLQ (141 aa)) is CR2; histone tail-binding. Residues Lys-354, Lys-455, and Lys-468 each participate in a glycyl lysine isopeptide (Lys-Gly) (interchain with G-Cter in SUMO2) cross-link. A GATA-type zinc finger spans residues 415-468 (RVEPFVCAQCRTDFTPHWKQEKNGKILCEQCMTSNQKKALKAEHTNRLKNAFVK). A coiled-coil region spans residues 450–483 (QKKALKAEHTNRLKNAFVKALQQEQEIEQRLQQQ). Phosphoserine is present on Ser-487. Lys-499 is covalently cross-linked (Glycyl lysine isopeptide (Lys-Gly) (interchain with G-Cter in SUMO2)).

As to quaternary structure, homooligomer. Component of the nucleosome remodeling and deacetylase (NuRD) repressor complex, composed of core proteins MTA1, MTA2, MTA3, RBBP4, RBBP7, HDAC1, HDAC2, MBD2, MBD3, and peripherally associated proteins CDK2AP1, CDK2AP2, GATAD2A, GATAD2B, CHD3, CHD4 and CHD5. The exact stoichiometry of the NuRD complex is unknown, and some subunits such as MBD2 and MBD3, GATAD2A and GATAD2B, and CHD3, CHD4 and CHD5 define mutually exclusive NuRD complexes. Interacts with MBD2; this is required for the enhancement of MBD2-mediated repression and for targeting to the chromatin. Interacts with MBD3. Component of the MeCP1 histone deacetylase complex. Interacts with histone tails, including that of histones H2A, H2B, H3 and H4. Interacts with ERCC6.

The protein resides in the nucleus speckle. Its subcellular location is the nucleus. The protein localises to the chromosome. In terms of biological role, transcriptional repressor. Acts as a component of the histone deacetylase NuRD complex which participates in the remodeling of chromatin. Enhances MBD2-mediated repression. Efficient repression requires the presence of GATAD2A. Targets MBD3 to discrete loci in the nucleus. May play a role in synapse development. The chain is Transcriptional repressor p66-beta (Gatad2b) from Mus musculus (Mouse).